The following is a 273-amino-acid chain: Probable ribosomal RNA small subunit methyltransferase A (273 aa).

The S-adenosyl-L-methionine site is built by Asn-26, Leu-28, Gly-53, Glu-74, Asp-98, and Asn-113.

This sequence belongs to the class I-like SAM-binding methyltransferase superfamily. rRNA adenine N(6)-methyltransferase family. RsmA subfamily.

The protein resides in the cytoplasm. In terms of biological role, specifically dimethylates two adjacent adenosines in the loop of a conserved hairpin near the 3'-end of 16S rRNA in the 30S particle. May play a critical role in biogenesis of 30S subunits. The sequence is that of Probable ribosomal RNA small subunit methyltransferase A from Methanothermobacter thermautotrophicus (strain ATCC 29096 / DSM 1053 / JCM 10044 / NBRC 100330 / Delta H) (Methanobacterium thermoautotrophicum).